Reading from the N-terminus, the 614-residue chain is UvrABC system protein C (614 aa).

The GIY-YIG domain maps to 20–98; the sequence is TAPGVYRMYA…IKSLSPRYNV (79 aa). The region spanning 207–242 is the UVR domain; that stretch reads DELTRELGEQMQAASEALEFEQAARLRDLISSLRSM.

This sequence belongs to the UvrC family. In terms of assembly, interacts with UvrB in an incision complex.

The protein resides in the cytoplasm. Its function is as follows. The UvrABC repair system catalyzes the recognition and processing of DNA lesions. UvrC both incises the 5' and 3' sides of the lesion. The N-terminal half is responsible for the 3' incision and the C-terminal half is responsible for the 5' incision. The polypeptide is UvrABC system protein C (Stenotrophomonas maltophilia (strain R551-3)).